Here is a 2193-residue protein sequence, read N- to C-terminus: Protein sidekick-1 (2193 aa).

Residues 1–23 (MARARPSVAGGGVAAPPERAGPG) are compositionally biased toward low complexity. The interval 1-56 (MARARPSVAGGGVAAPPERAGPGRPRRSRTGHHCDPECPGLRAAPRTPGPGAGRRA) is disordered. 5 consecutive Ig-like C2-type domains span residues 86 to 168 (PYFK…SEIQ), 173 to 259 (GNFM…SPFI), 275 to 363 (PIIV…AFLS), 368 to 458 (PYFT…LDVT), and 462 to 551 (PAFT…AMLT). An intrachain disulfide couples Cys-108 to Cys-151. N-linked (GlcNAc...) asparagine glycans are attached at residues Asn-123, Asn-253, and Asn-283. Intrachain disulfides connect Cys-297–Cys-344, Cys-390–Cys-440, and Cys-483–Cys-535. N-linked (GlcNAc...) asparagine glycosylation is found at Asn-532, Asn-545, and Asn-554. The Ig-like C2-type 6 domain occupies 556–645 (TSIVHPPEDR…GSDSRTARLE (90 aa)). Cys-577 and Cys-629 are joined by a disulfide. Fibronectin type-III domains are found at residues 652-748 (PPQN…LPEE), 753-849 (PPKN…TLQG), 854-952 (PPQN…THED), 956-1050 (AVGH…VPPD), 1054-1153 (APSN…TLQA), 1158-1256 (APTS…TRES), 1261-1358 (APEN…TKDD), 1362-1456 (PPVR…TEKR), 1461-1558 (PPRE…TLQD), 1563-1681 (PPGS…VGEA), 1686-1782 (APQN…THQA), 1786-1881 (PPSF…AGPA), and 1884-1982 (SPGS…SAQA). Residues Asn-764, Asn-803, Asn-864, Asn-997, and Asn-1006 are each glycosylated (N-linked (GlcNAc...) asparagine). Residues Asn-1264 and Asn-1315 are each glycosylated (N-linked (GlcNAc...) asparagine). N-linked (GlcNAc...) asparagine glycans are attached at residues Asn-1636, Asn-1730, Asn-1801, and Asn-1875. The helical transmembrane segment at 1992–2012 (FLLVMALSSLLLILLVVFVLV) threads the bilayer. Residues 2013–2193 (LHGQSKKYKS…APLTGFSSFV (181 aa)) are Cytoplasmic-facing. Positions 2057–2080 (STFSKKNGTRSPPRPSPGGLHYSD) are disordered. A PDZ-binding motif is present at residues 2187–2193 (TGFSSFV).

The protein belongs to the sidekick family. As to quaternary structure, homodimer; mediates homophilic interactions to promote cell adhesion. Interacts (via PDZ-binding motif) with MAGI1, MAGI2, DLG2, DLG3 and DLG4. Does not mediate homophilic interactions. Expressed by non-overlapping subsets of retinal neurons. Sdk1 and Sdk2 are expressed in non-overlapping subsets of interneurons and retinal ganglion cells (RGCs) that form synapses in distinct inner plexiform layer (IPL) sublaminae (at protein level).

It is found in the cell membrane. The protein resides in the synapse. Functionally, adhesion molecule that promotes lamina-specific synaptic connections in the retina. Expressed in specific subsets of interneurons and retinal ganglion cells (RGCs) and promotes synaptic connectivity via homophilic interactions. The polypeptide is Protein sidekick-1 (Mus musculus (Mouse)).